We begin with the raw amino-acid sequence, 152 residues long: Protein SprT-like (152 aa).

A SprT-like domain is found at 7-147; sequence QRLVEEVSLQ…CGKCKGKLKP (141 aa). Histidine 67 provides a ligand contact to Zn(2+). The active site involves glutamate 68. Residue histidine 71 coordinates Zn(2+).

This sequence belongs to the SprT family. Zn(2+) is required as a cofactor.

The protein localises to the cytoplasm. The polypeptide is Protein SprT-like (Bacillus cereus (strain ATCC 14579 / DSM 31 / CCUG 7414 / JCM 2152 / NBRC 15305 / NCIMB 9373 / NCTC 2599 / NRRL B-3711)).